Here is a 1589-residue protein sequence, read N- to C-terminus: Pentafunctional AROM polypeptide (1589 aa).

Residues 1-392 form a 3-dehydroquinate synthase region; it reads MVKFEKVPIL…YGKSAHYVND (392 aa). Residues 43–45, 78–81, 109–111, and D114 contribute to the NAD(+) site; these read DTN, EANK, and GGI. R125 provides a ligand contact to 7-phospho-2-dehydro-3-deoxy-D-arabino-heptonate. 134 to 135 contacts NAD(+); the sequence is TS. 7-phospho-2-dehydro-3-deoxy-D-arabino-heptonate-binding residues include D141 and K147. K156 lines the NAD(+) pocket. N157 contributes to the 7-phospho-2-dehydro-3-deoxy-D-arabino-heptonate binding site. Residues 174-177 and N185 contribute to the NAD(+) site; that span reads WLET. A Zn(2+)-binding site is contributed by E189. 7-phospho-2-dehydro-3-deoxy-D-arabino-heptonate contacts are provided by residues 189 to 192 and K258; that span reads EVIK. E268 functions as the Proton acceptor; for 3-dehydroquinate synthase activity in the catalytic mechanism. Residues 272–276 and H279 contribute to the 7-phospho-2-dehydro-3-deoxy-D-arabino-heptonate site; that span reads RNLLN. Zn(2+) is bound at residue H279. H283 serves as the catalytic Proton acceptor; for 3-dehydroquinate synthase activity. Residues H295 and K364 each contribute to the 7-phospho-2-dehydro-3-deoxy-D-arabino-heptonate site. H295 contributes to the Zn(2+) binding site. The segment at 405-872 is EPSP synthase; it reads VYPFSNIPQE…WDVLHTELGA (468 aa). C854 functions as the For EPSP synthase activity in the catalytic mechanism. Residues 891 to 1081 form a shikimate kinase region; sequence SVVLIGMRAA…VPNKRSAFVC (191 aa). Position 896-903 (896-903) interacts with ATP; sequence GMRAAGKS. Residues 1082–1294 are 3-dehydroquinase; the sequence is LTFGDLTEKA…SAPGQLTLAQ (213 aa). The active-site Proton acceptor; for 3-dehydroquinate dehydratase activity is the H1199. The active-site Schiff-base intermediate with substrate; for 3-dehydroquinate dehydratase activity is K1228. Residues 1307-1589 form a shikimate dehydrogenase region; that stretch reads SKKFFVVGNP…QEIFNAVTRD (283 aa).

In the N-terminal section; belongs to the sugar phosphate cyclases superfamily. Dehydroquinate synthase family. The protein in the 2nd section; belongs to the EPSP synthase family. It in the 3rd section; belongs to the shikimate kinase family. This sequence in the 4th section; belongs to the type-I 3-dehydroquinase family. In the C-terminal section; belongs to the shikimate dehydrogenase family. As to quaternary structure, homodimer. Zn(2+) is required as a cofactor.

It localises to the cytoplasm. It carries out the reaction 7-phospho-2-dehydro-3-deoxy-D-arabino-heptonate = 3-dehydroquinate + phosphate. It catalyses the reaction 3-dehydroquinate = 3-dehydroshikimate + H2O. The catalysed reaction is shikimate + NADP(+) = 3-dehydroshikimate + NADPH + H(+). The enzyme catalyses shikimate + ATP = 3-phosphoshikimate + ADP + H(+). It carries out the reaction 3-phosphoshikimate + phosphoenolpyruvate = 5-O-(1-carboxyvinyl)-3-phosphoshikimate + phosphate. The protein operates within metabolic intermediate biosynthesis; chorismate biosynthesis; chorismate from D-erythrose 4-phosphate and phosphoenolpyruvate: step 2/7. It participates in metabolic intermediate biosynthesis; chorismate biosynthesis; chorismate from D-erythrose 4-phosphate and phosphoenolpyruvate: step 3/7. Its pathway is metabolic intermediate biosynthesis; chorismate biosynthesis; chorismate from D-erythrose 4-phosphate and phosphoenolpyruvate: step 4/7. It functions in the pathway metabolic intermediate biosynthesis; chorismate biosynthesis; chorismate from D-erythrose 4-phosphate and phosphoenolpyruvate: step 5/7. The protein operates within metabolic intermediate biosynthesis; chorismate biosynthesis; chorismate from D-erythrose 4-phosphate and phosphoenolpyruvate: step 6/7. Its function is as follows. The AROM polypeptide catalyzes 5 consecutive enzymatic reactions in prechorismate polyaromatic amino acid biosynthesis. This is Pentafunctional AROM polypeptide from Zygosaccharomyces rouxii (strain ATCC 2623 / CBS 732 / NBRC 1130 / NCYC 568 / NRRL Y-229).